The chain runs to 313 residues: tRNA pseudouridine synthase B (313 aa).

His44 contacts substrate. Asp49 serves as the catalytic Nucleophile. The substrate site is built by Tyr77, Tyr180, and Leu201.

The protein belongs to the pseudouridine synthase TruB family. Type 1 subfamily.

It carries out the reaction uridine(55) in tRNA = pseudouridine(55) in tRNA. Functionally, responsible for synthesis of pseudouridine from uracil-55 in the psi GC loop of transfer RNAs. In Hamiltonella defensa subsp. Acyrthosiphon pisum (strain 5AT), this protein is tRNA pseudouridine synthase B.